A 111-amino-acid polypeptide reads, in one-letter code: PCNA-associated factor (111 aa).

Position 8 is a phosphoserine (Ser8). Lys15 participates in a covalent cross-link: Glycyl lysine isopeptide (Lys-Gly) (interchain with G-Cter in ubiquitin). The short motif at 23-34 is the D-box element; sequence RKVLGSSTSATN. The interval 23–111 is disordered; that stretch reads RKVLGSSTSA…QPDHTNDEKE (89 aa). Lys24 is modified (N6-acetyllysine; alternate). Residue Lys24 forms a Glycyl lysine isopeptide (Lys-Gly) (interchain with G-Cter in ubiquitin); alternate linkage. Residues Ser28, Ser31, and Ser72 each carry the phosphoserine modification. The span at 28–40 shows a compositional bias: low complexity; sequence SSTSATNSTSVSS. The short motif at 62 to 72 is the PIP-box element; that stretch reads QKGIGEFFRLS. Residues 72–81 show a composition bias toward basic and acidic residues; that stretch reads SPKDSEKENQ. A KEN box motif is present at residues 78 to 80; the sequence is KEN. The Initiation motif signature appears at 85–97; that stretch reads EAGSSGLGKAKRK.

As to quaternary structure, interacts (when monoubiquitinated at Lys-15 and Lys-24) with PCNA. Interacts with isoform 2/p33ING1b of ING1. Interacts with BRCA1. Post-translationally, monoubiquitinated at Lys-15 and Lys-24 during normal S phase, promoting its association with PCNA. Also diubiquitinated at these 2 sites. Following DNA damage, monoubiquitin chains at Lys-15 and Lys-24 are probably extended, leading to disrupt the interaction with PCNA. Polyubiquitinated by the APC/C complex at the mitotic exit, leading to its degradation by the proteasome. As to expression, expressed predominantly in liver, pancreas and placenta. Not detected in heart or brain. Highly expressed in a number of tumors, especially esophageal tumors, in anaplastic thyroid carcinomas, adrenocortical carcinomas, and in non-small-cell lung cancer lines.

It localises to the nucleus. Its subcellular location is the cytoplasm. The protein resides in the perinuclear region. PCNA-binding protein that acts as a regulator of DNA repair during DNA replication. Following DNA damage, the interaction with PCNA is disrupted, facilitating the interaction between monoubiquitinated PCNA and the translesion DNA synthesis DNA polymerase eta (POLH) at stalled replisomes, facilitating the bypass of replication-fork-blocking lesions. Also acts as a regulator of centrosome number. The protein is PCNA-associated factor of Homo sapiens (Human).